A 234-amino-acid chain; its full sequence is 3,4-dihydroxy-2-butanone 4-phosphate synthase (234 aa).

Residues 39–40, aspartate 44, 152–156, and glutamate 176 contribute to the D-ribulose 5-phosphate site; these read RE and RRGHT. Glutamate 40 lines the Mg(2+) pocket. Histidine 155 provides a ligand contact to Mg(2+).

This sequence belongs to the DHBP synthase family. Homodimer. Mg(2+) is required as a cofactor. Requires Mn(2+) as cofactor.

The enzyme catalyses D-ribulose 5-phosphate = (2S)-2-hydroxy-3-oxobutyl phosphate + formate + H(+). Its pathway is cofactor biosynthesis; riboflavin biosynthesis; 2-hydroxy-3-oxobutyl phosphate from D-ribulose 5-phosphate: step 1/1. Functionally, catalyzes the conversion of D-ribulose 5-phosphate to formate and 3,4-dihydroxy-2-butanone 4-phosphate. The chain is 3,4-dihydroxy-2-butanone 4-phosphate synthase from Pelobacter propionicus (strain DSM 2379 / NBRC 103807 / OttBd1).